Consider the following 1603-residue polypeptide: GATOR1 complex protein DEPDC5 (1603 aa).

3 disordered regions span residues 427–450 (GKKPASEKAKNGRDTSLGSPKESE), 484–527 (VRER…SSLG), and 696–720 (LSNSGAGMNPRTQNKDSLEDSVSTS). Basic and acidic residues predominate over residues 430–439 (PASEKAKNGR). The segment covering 494-508 (SASSCDVSSSPSLPS) has biased composition (low complexity). Ser505 carries the phosphoserine modification. Composition is skewed to polar residues over residues 518-527 (SQASDDSSLG) and 696-707 (LSNSGAGMNPRT). Residue Ser1002 is modified to Phosphoserine; by PIM1. The segment covering 1135–1153 (DRGNSQTFGNSQNIGEQGY) has biased composition (polar residues). The disordered stretch occupies residues 1135–1165 (DRGNSQTFGNSQNIGEQGYSSTNSSDSSSQQ). Low complexity predominate over residues 1154–1165 (SSTNSSDSSSQQ). In terms of domain architecture, DEP spans 1187-1262 (PSTGVQLLSE…YGFYFYKIVT (76 aa)). Residue Ser1530 is modified to Phosphoserine; by PKB/AKT1 and PIM1.

The protein belongs to the IML1 family. In terms of assembly, within the GATOR complex, component of the GATOR1 subcomplex, made of DEPDC5, NPRL2 and NPRL3. GATOR1 mediates the strong interaction of the GATOR complex with small GTPases Rag (RagA/RRAGA, RagB/RRAGB, RagC/RRAGC and/or RagD/RRAGD) heterodimers. Interacts with SAMTOR; interaction is direct and takes place in presence of methionine, leading to inhibit the activity of the GATOR1 complex. Phosphorylation at Ser-1002 and Ser-1530 by AKT1 and PIM1 inhibit the activity of DEPDC5, releasing inhibition of the mTORC1 pathway. Post-translationally, ubiquitinated. Amino acid-induced 'Lys-48'-linked polyubiquitination of DEPDC5 by the BCR(KLHL22) ubiquitin ligase complex leads to DEPDC5 proteasomal degradation and inhibition of the GATOR1 complex. Ubiquitination may occur at multiple lysines. In terms of tissue distribution, expressed in developing and adult brain.

The protein localises to the lysosome membrane. The protein resides in the cytoplasm. It localises to the cytosol. Its subcellular location is the perinuclear region. As a component of the GATOR1 complex functions as an inhibitor of the amino acid-sensing branch of the mTORC1 pathway. In response to amino acid depletion, the GATOR1 complex has GTPase activating protein (GAP) activity and strongly increases GTP hydrolysis by RagA/RRAGA (or RagB/RRAGB) within heterodimeric Rag complexes, thereby turning them into their inactive GDP-bound form, releasing mTORC1 from lysosomal surface and inhibiting mTORC1 signaling. In the presence of abundant amino acids, the GATOR1 complex is negatively regulated by GATOR2, the other GATOR subcomplex, in this amino acid-sensing branch of the TORC1 pathway. Within the GATOR1 complex, DEPDC5 mediates direct interaction with the nucleotide-binding pocket of small GTPases Rag (RagA/RRAGA, RagB/RRAGB, RagC/RRAGC and/or RagD/RRAGD) and coordinates their nucleotide loading states by promoting RagA/RRAGA or RagB/RRAGB into their GDP-binding state and RagC/RRAGC or RagD/RRAGD into their GTP-binding state. However, it does not execute the GAP activity, which is mediated by NPRL2. This chain is GATOR1 complex protein DEPDC5, found in Homo sapiens (Human).